Consider the following 1740-residue polypeptide: DNA polymerase (1740 aa).

Residues Ile472 to Asp491 form a disordered region. The segment covering Asp480–Asp491 has biased composition (acidic residues). Residues Val1189–Tyr1334 form the DOD-type homing endonuclease domain. The interval Pro1673–Ile1701 is disordered. Residues Tyr1685–Gln1700 show a composition bias toward polar residues.

The protein belongs to the DNA polymerase type-B family. Post-translationally, this protein undergoes a protein self splicing that involves a post-translational excision of the intervening region (intein) followed by peptide ligation.

The catalysed reaction is DNA(n) + a 2'-deoxyribonucleoside 5'-triphosphate = DNA(n+1) + diphosphate. This is DNA polymerase (POLB) from Acanthamoeba polyphaga (Amoeba).